The primary structure comprises 87 residues: Potassium channel toxin Ttr-beta-KTx (87 aa).

Positions 1-19 are cleaved as a signal peptide; sequence MERKWALLLFLGMVTLVSC. Positions 20–27 are excised as a propeptide; that stretch reads GLREKHVQ. Residues 53–87 enclose the BetaSPN-type CS-alpha/beta domain; the sequence is QFGCPAYEGYCNNHCQDIKRKDGECHGFKCKCAKD. Cystine bridges form between Cys-56-Cys-77, Cys-63-Cys-82, and Cys-67-Cys-84.

Belongs to the long chain scorpion toxin family. Class 1 subfamily. In terms of tissue distribution, expressed by the venom gland.

The protein resides in the secreted. Functionally, inhibits voltage-gated potassium channel. This is Potassium channel toxin Ttr-beta-KTx from Tityus trivittatus (Argentinean scorpion).